We begin with the raw amino-acid sequence, 217 residues long: NAD(P)H-quinone oxidoreductase subunit M, chloroplastic (217 aa).

The N-terminal 21 residues, Met1 to Val21, are a transit peptide targeting the chloroplast. Residues Glu48–Pro67 are disordered. Over residues Glu50–Lys62 the composition is skewed to basic and acidic residues.

It belongs to the NDH complex subunit M family. As to quaternary structure, part of the chloroplast NDH complex, composed of a mixture of chloroplast and nucleus encoded subunits. Component of the NDH subcomplex A, at least composed of ndhH, ndhI, ndhJ, ndhK, ndhL, ndhM, ndhN and ndhO.

Its subcellular location is the plastid. The protein localises to the chloroplast thylakoid membrane. It carries out the reaction a plastoquinone + NADH + (n+1) H(+)(in) = a plastoquinol + NAD(+) + n H(+)(out). The enzyme catalyses a plastoquinone + NADPH + (n+1) H(+)(in) = a plastoquinol + NADP(+) + n H(+)(out). Functionally, NDH shuttles electrons from NAD(P)H:plastoquinone, via FMN and iron-sulfur (Fe-S) centers, to quinones in the photosynthetic chain and possibly in a chloroplast respiratory chain. The immediate electron acceptor for the enzyme in this species is believed to be plastoquinone. Couples the redox reaction to proton translocation, and thus conserves the redox energy in a proton gradient. This Arabidopsis thaliana (Mouse-ear cress) protein is NAD(P)H-quinone oxidoreductase subunit M, chloroplastic.